The following is an 817-amino-acid chain: MSEADQALVGPKADEPSPPAEEKDEGGGKEAAADAAPGPSASFRLMVTRREPAVKLQYAVSGLEPLSWSEDHRVSVSTARSVAVLELICDVHNPGQDLVIHRTSVPAPLNSCLLKVGSKTEVAECKEKFASSKDPTISQTFMLDRMFNPEGKALPPMRGFKYTSWSPMGCDANGRCLLAALTMDNRLTVQVNLNRLQWVQLVDLTEIYGDRLYETSYRLSKNEAPEGNLGDFAEFQRRHSMQTPVRMEWSSICTTQQVKHNNECRDVSSVLLAVLFENGNIAVWQFQLPFVGKESISSCNTIESGISSPSVLFWWEYEHNNRKMSGLIVGSAFGPVKILPVNLKAVKGYFTLRQPVVLWKEMDKLPVHSIKCVPLYHPYQKCSCSLVVAARGSYVFWCLLLISKAGLNVHNSHVTGLHSLPIVSITADKQNGTVYTCSSDGKVRQLIPIFTDVALKFEHQLIKLSDVFGSVRTHGIAVSPCGAYLAIITTEGMMNGLHPVNKNYQVQFVTLKTFEEAAAQLLESSVQNLFKQVDLIDLVRWKILKDKHIPQFLHEALEKKIESSGVTYFWRFKLFLLRILYQSMQKSPSEALWKPTHEDSKILLVDSPGMGDGEDEQQEEGTSKQGTKAGLQEKSKEGDTEETPEDSLTAGGDTGGREPVEEKLLEIQGKIEAVEMHLTREHMKRVLGEVYLHTWITENTSIPTRGLCNFLMSDEDYDDRTAQVLIGHISKKMNKQTFPERCSLCKEILPFTDRKQAVCSNGHIWLRCFLTYQSCQSLIYRRCLLHDSIARHPVPEDPDWIKRLLQSPCPFCDSPVF.

Position 1 is an N-acetylmethionine (M1). Residues 1–40 (MSEADQALVGPKADEPSPPAEEKDEGGGKEAAADAAPGPS) are disordered. Residue K221 forms a Glycyl lysine isopeptide (Lys-Gly) (interchain with G-Cter in SUMO2) linkage. S600 and S607 each carry phosphoserine. The tract at residues 603 to 658 (LLVDSPGMGDGEDEQQEEGTSKQGTKAGLQEKSKEGDTEETPEDSLTAGGDTGGRE) is disordered. K624 participates in a covalent cross-link: Glycyl lysine isopeptide (Lys-Gly) (interchain with G-Cter in SUMO2). The residue at position 647 (S647) is a Phosphoserine.

It belongs to the TFIIIC subunit 4 family. Part of the TFIIIC subcomplex TFIIIC2, consisting of six subunits, GTF3C1, GTF3C2, GTF3C3, GTF3C4, GTF3C5 and GTF3C6. Interacts with BRF1, GTF3C1, GTF3C2, GTF3C5, GTF3C6, POLR3C and POLR3F.

It is found in the nucleus. It catalyses the reaction L-lysyl-[protein] + acetyl-CoA = N(6)-acetyl-L-lysyl-[protein] + CoA + H(+). Its function is as follows. Essential for RNA polymerase III to make a number of small nuclear and cytoplasmic RNAs, including 5S RNA, tRNA, and adenovirus-associated (VA) RNA of both cellular and viral origin. Has histone acetyltransferase activity (HAT) with unique specificity for free and nucleosomal H3. May cooperate with GTF3C5 in facilitating the recruitment of TFIIIB and RNA polymerase through direct interactions with BRF1, POLR3C and POLR3F. May be localized close to the A box. The sequence is that of General transcription factor 3C polypeptide 4 (Gtf3c4) from Mus musculus (Mouse).